A 185-amino-acid chain; its full sequence is MISVNDFYPGLTIELEGEIYIVLEYQHVHMAQGQATVRVKLKNLKTGNVIRKTFKSDEYVPQAFINKREAEYLYKQGDEYYFIDNESFEQYILTEEQLGDAIKYLKEGNTVSVLFYEGNPIGIELPTTVVLEVVETDPGLRGDTVSGGSKPAKLETGLVIQVPLFIQIGDKVVVDTRYAKYVERA.

It belongs to the elongation factor P family.

The protein resides in the cytoplasm. Its pathway is protein biosynthesis; polypeptide chain elongation. Functionally, involved in peptide bond synthesis. Stimulates efficient translation and peptide-bond synthesis on native or reconstituted 70S ribosomes in vitro. Probably functions indirectly by altering the affinity of the ribosome for aminoacyl-tRNA, thus increasing their reactivity as acceptors for peptidyl transferase. The polypeptide is Elongation factor P (Dictyoglomus turgidum (strain DSM 6724 / Z-1310)).